We begin with the raw amino-acid sequence, 475 residues long: Ribulose bisphosphate carboxylase large chain (475 aa).

Residues 1–2 (MS) constitute a propeptide that is removed on maturation. Proline 3 carries the post-translational modification N-acetylproline. Position 14 is an N6,N6,N6-trimethyllysine (lysine 14). Residues asparagine 123 and threonine 173 each contribute to the substrate site. Lysine 175 functions as the Proton acceptor in the catalytic mechanism. Lysine 177 lines the substrate pocket. Mg(2+) contacts are provided by lysine 201, aspartate 203, and glutamate 204. Lysine 201 is modified (N6-carboxylysine). Histidine 294 serves as the catalytic Proton acceptor. Substrate-binding residues include arginine 295, histidine 327, and serine 379.

This sequence belongs to the RuBisCO large chain family. Type I subfamily. In terms of assembly, heterohexadecamer of 8 large chains and 8 small chains; disulfide-linked. The disulfide link is formed within the large subunit homodimers. The cofactor is Mg(2+). The disulfide bond which can form in the large chain dimeric partners within the hexadecamer appears to be associated with oxidative stress and protein turnover.

Its subcellular location is the plastid. It localises to the chloroplast. It catalyses the reaction 2 (2R)-3-phosphoglycerate + 2 H(+) = D-ribulose 1,5-bisphosphate + CO2 + H2O. The catalysed reaction is D-ribulose 1,5-bisphosphate + O2 = 2-phosphoglycolate + (2R)-3-phosphoglycerate + 2 H(+). Functionally, ruBisCO catalyzes two reactions: the carboxylation of D-ribulose 1,5-bisphosphate, the primary event in carbon dioxide fixation, as well as the oxidative fragmentation of the pentose substrate in the photorespiration process. Both reactions occur simultaneously and in competition at the same active site. The chain is Ribulose bisphosphate carboxylase large chain from Carpinus caroliniana (American hornbeam).